Here is a 199-residue protein sequence, read N- to C-terminus: Peptidyl-tRNA hydrolase (199 aa).

Y18 contributes to the tRNA binding site. H23 functions as the Proton acceptor in the catalytic mechanism. Y72, N74, and N120 together coordinate tRNA.

The protein belongs to the PTH family. Monomer.

It localises to the cytoplasm. The enzyme catalyses an N-acyl-L-alpha-aminoacyl-tRNA + H2O = an N-acyl-L-amino acid + a tRNA + H(+). In terms of biological role, hydrolyzes ribosome-free peptidyl-tRNAs (with 1 or more amino acids incorporated), which drop off the ribosome during protein synthesis, or as a result of ribosome stalling. Catalyzes the release of premature peptidyl moieties from peptidyl-tRNA molecules trapped in stalled 50S ribosomal subunits, and thus maintains levels of free tRNAs and 50S ribosomes. The sequence is that of Peptidyl-tRNA hydrolase from Bifidobacterium adolescentis (strain ATCC 15703 / DSM 20083 / NCTC 11814 / E194a).